Reading from the N-terminus, the 232-residue chain is Ribonuclease 3 (232 aa).

Residues 6–137 form the RNase III domain; the sequence is QEMLKRDFNI…FIGALYLDQG (132 aa). Glu50 is a Mg(2+) binding site. Asp54 is an active-site residue. The Mg(2+) site is built by Asp123 and Glu126. Residue Glu126 is part of the active site. Residues 163 to 232 enclose the DRBM domain; that stretch reads DNKTELQEVL…AYQALKKLRK (70 aa).

It belongs to the ribonuclease III family. As to quaternary structure, homodimer. It depends on Mg(2+) as a cofactor.

The protein localises to the cytoplasm. The catalysed reaction is Endonucleolytic cleavage to 5'-phosphomonoester.. Its function is as follows. Digests double-stranded RNA. Involved in the processing of primary rRNA transcript to yield the immediate precursors to the large and small rRNAs (23S and 16S). Processes some mRNAs, and tRNAs when they are encoded in the rRNA operon. Processes pre-crRNA and tracrRNA of type II CRISPR loci if present in the organism. The protein is Ribonuclease 3 of Ligilactobacillus salivarius (strain UCC118) (Lactobacillus salivarius).